Here is a 645-residue protein sequence, read N- to C-terminus: 1,4-alpha-glucan branching enzyme GlgB (645 aa).

The active-site Nucleophile is Asp309. Residue Glu352 is the Proton donor of the active site. Positions 619-645 (VKTRKGSKKQDGSKTKVRSNVTSRGKR) are disordered. The segment covering 636 to 645 (RSNVTSRGKR) has biased composition (polar residues).

It belongs to the glycosyl hydrolase 13 family. GlgB subfamily. In terms of assembly, monomer.

The catalysed reaction is Transfers a segment of a (1-&gt;4)-alpha-D-glucan chain to a primary hydroxy group in a similar glucan chain.. The protein operates within glycan biosynthesis; glycogen biosynthesis. In terms of biological role, catalyzes the formation of the alpha-1,6-glucosidic linkages in glycogen by scission of a 1,4-alpha-linked oligosaccharide from growing alpha-1,4-glucan chains and the subsequent attachment of the oligosaccharide to the alpha-1,6 position. The chain is 1,4-alpha-glucan branching enzyme GlgB from Bacillus cereus (strain ATCC 10987 / NRS 248).